Reading from the N-terminus, the 608-residue chain is Threonine--tRNA ligase (608 aa).

Residues 1–145 form an editing domain region; sequence MKTLLIHAKH…TIKPGRRVRP (145 aa). 2 catalytic regions span residues 192–489 and 193–489; these read PKYL…PSLP and KYLE…PSLP. Residues Cys286, His337, and His458 each coordinate Zn(2+).

The protein belongs to the class-II aminoacyl-tRNA synthetase family. Homodimer. It depends on Zn(2+) as a cofactor.

It is found in the cytoplasm. The catalysed reaction is tRNA(Thr) + L-threonine + ATP = L-threonyl-tRNA(Thr) + AMP + diphosphate + H(+). Functionally, catalyzes the attachment of threonine to tRNA(Thr) in a two-step reaction: L-threonine is first activated by ATP to form Thr-AMP and then transferred to the acceptor end of tRNA(Thr). Also edits incorrectly charged L-seryl-tRNA(Thr). In Thermofilum pendens (strain DSM 2475 / Hrk 5), this protein is Threonine--tRNA ligase.